We begin with the raw amino-acid sequence, 107 residues long: MMKVLVVVALLVTLISYSSSEGIDDLEADELLSLMADEQTRKECIPKHHECTSNKHGCCRGNFFKYKCQCTTVVTQDGEQTERCFCGTPPHHKAAELVVGFGKKIFG.

An N-terminal signal peptide occupies residues 1 to 20 (MMKVLVVVALLVTLISYSSS). A propeptide spanning residues 21–41 (EGIDDLEADELLSLMADEQTR) is cleaved from the precursor. 4 disulfide bridges follow: cysteine 44–cysteine 59, cysteine 51–cysteine 68, cysteine 58–cysteine 86, and cysteine 70–cysteine 84.

The protein belongs to the neurotoxin 19 (CSTX) family. 04 (U1-Lctx) subfamily. In terms of tissue distribution, expressed by the venom gland.

It localises to the secreted. The chain is U1-lycotoxin-Ls1b from Lycosa singoriensis (Wolf spider).